A 336-amino-acid chain; its full sequence is MQKMRTLGEFIVEKQHDFPHASGELSSLLASIRLAAKIVNREINKAGLADIIGASGNDNIQGEEQQKLDLYANEKFKAALEARDQVCGVASEEEDEAVAFSKELNKNAKYVVLMDPLDGSSNIDVNVSVGTIFSIYRRVSPVGTPPTQEDFLQPGNKQVAAGYVIYGSSTMLVYTTGNGVNGFTYDPSLGTFYLSHENMRIPENGKIYSINEGNYIRFPTGVKKYIKFCQENVPEEGRPYTSRYIGSLVADFHRNLLKGGIYLYPSTQSHPNGKLRLLYECNPMAFLIEQAGGLASDGARRIMDIKPTELHQRVPFFVGSKNMVHKVETFLETYPD.

4 residues coordinate Mg(2+): Glu-92, Asp-115, Leu-117, and Asp-118. Substrate is bound by residues 118–121, Asn-211, Tyr-244, 262–264, and Lys-274; these read DGSS and YLY. Glu-280 contributes to the Mg(2+) binding site.

This sequence belongs to the FBPase class 1 family. In terms of assembly, homotetramer. Mg(2+) serves as cofactor.

It is found in the cytoplasm. It catalyses the reaction beta-D-fructose 1,6-bisphosphate + H2O = beta-D-fructose 6-phosphate + phosphate. It participates in carbohydrate biosynthesis; gluconeogenesis. This is Fructose-1,6-bisphosphatase class 1 from Vibrio cholerae serotype O1 (strain ATCC 39315 / El Tor Inaba N16961).